The following is a 695-amino-acid chain: Calcium-binding acidic-repeat protein (695 aa).

The or 23 signal peptide spans 1–20 (MSHLWCWLFLVLCLACLVLS). 6 TSP type-3 repeats span residues 24–38 (KDSDGDGLLDVDEIN), 47–56 (ADSDQDGLTD), 70–82 (KDTDDDSIGDGVE), 184–196 (GDSDDDGVSDGAE), 202–214 (KDSDGDGLTDEEE), and 248–260 (GDSDDDGLGDGAE). Residues 45-695 (YNADSDQDGL…TDPWRSDHSV (651 aa)) are disordered. Over residues 59–70 (EVNRHQTHPQDK) the composition is skewed to basic and acidic residues. Acidic residues-rich tracts occupy residues 271 to 283 (ADSDNDGLDDGEE), 291 to 306 (PEDPDSDNDGLNDGDE), and 313 to 324 (DPEEDDSDEDGV). 15 TSP type-3 repeats span residues 294 to 308 (PDSDNDGLNDGDEVN), 317 to 329 (DDSDEDGVCDGAE), 340 to 352 (EDSDNDGIPDGAE), 363 to 375 (EDSDDDGIADGAE), 379 to 393 (TDSDGDGLPDEDEVA), 402 to 414 (ADSDYDGLTDGAE), 425 to 437 (KDTDDDGLGDGVE), 470 to 482 (EDTDDDGLTDGAE), 493 to 505 (ADTDDDGLTDGAE), 516 to 528 (ADSDGDGLSDGAE), 539 to 551 (GDSDDDGVPDAAE), 555 to 569 (KDSDGDGLSDTDEVR), 600 to 609 (RDTDGDGVAD), 623 to 635 (ADTDDDGLTDGAE), and 646 to 658 (ADSDDDGLSDGAE). 2 stretches are compositionally biased toward acidic residues: residues 361-370 (NDEDSDDDGI) and 381-392 (SDGDGLPDEDEV). 2 stretches are compositionally biased toward acidic residues: residues 467–477 (PNDEDTDDDGL) and 491–500 (EDADTDDDGL). Residues 537 to 546 (NDGDSDDDGV) show a composition bias toward acidic residues. Over residues 589 to 603 (EILKHKTDPRNRDTD) the composition is skewed to basic and acidic residues. Residues 665 to 679 (NAKDGDSDDDGKADG) are compositionally biased toward basic and acidic residues.

It is found in the secreted. The protein resides in the endoplasmic reticulum. Functionally, may function as a calcium-binding protein. In Euglena gracilis, this protein is Calcium-binding acidic-repeat protein.